A 226-amino-acid polypeptide reads, in one-letter code: Protein BASIC PENTACYSTEINE7 (226 aa).

Residues 42–116 form a disordered region; that stretch reads IDLSQEPPAE…PSIPETKREK (75 aa). The segment covering 66–76 has biased composition (basic and acidic residues); that stretch reads RDSRNDTETVK. Residues 88–105 are compositionally biased toward basic residues; that stretch reads LKPKPQRKKRSVSNKSKK.

The protein belongs to the BBR/BPC family. As to expression, expressed in seedlings, leaves and pistils. Detected in anthers, in pollen grains, in young rosette, in leaf vasculature, in the lateral and primary roots, in embryo sac, and in the whole ovule.

It is found in the nucleus. Its function is as follows. Transcriptional regulator that specifically binds to GA-rich elements (GAGA-repeats) present in regulatory sequences of genes involved in developmental processes. This Arabidopsis thaliana (Mouse-ear cress) protein is Protein BASIC PENTACYSTEINE7 (BPC7).